An 811-amino-acid polypeptide reads, in one-letter code: DNA mismatch repair protein MutS (811 aa).

583-590 (GPNMAGKS) is a binding site for ATP.

The protein belongs to the DNA mismatch repair MutS family.

Functionally, this protein is involved in the repair of mismatches in DNA. It is possible that it carries out the mismatch recognition step. This protein has a weak ATPase activity. This is DNA mismatch repair protein MutS from Thermus thermophilus (strain ATCC BAA-163 / DSM 7039 / HB27).